The chain runs to 326 residues: Pyruvate dehydrogenase E1 component subunit beta (326 aa).

Residue E60 coordinates thiamine diphosphate. 4 residues coordinate K(+): I113, A161, I162, and N166.

Heterodimer of an alpha and a beta chain. The cofactor is thiamine diphosphate.

It is found in the plastid. The protein localises to the chloroplast. It carries out the reaction N(6)-[(R)-lipoyl]-L-lysyl-[protein] + pyruvate + H(+) = N(6)-[(R)-S(8)-acetyldihydrolipoyl]-L-lysyl-[protein] + CO2. Functionally, the pyruvate dehydrogenase complex catalyzes the overall conversion of pyruvate to acetyl-CoA and CO(2). It contains multiple copies of three enzymatic components: pyruvate dehydrogenase (E1), dihydrolipoamide acetyltransferase (E2) and lipoamide dehydrogenase (E3). The protein is Pyruvate dehydrogenase E1 component subunit beta (pdhB) of Chaetosphaeridium globosum (Charophycean green alga).